Reading from the N-terminus, the 478-residue chain is Mannose-1-phosphate guanylyltransferase (478 aa).

Belongs to the mannose-6-phosphate isomerase type 2 family.

It catalyses the reaction alpha-D-mannose 1-phosphate + GTP + H(+) = GDP-alpha-D-mannose + diphosphate. Its pathway is nucleotide-sugar biosynthesis; GDP-alpha-D-mannose biosynthesis; GDP-alpha-D-mannose from alpha-D-mannose 1-phosphate (GTP route): step 1/1. Involved in the biosynthesis of the capsular polysaccharide colanic acid. In Escherichia coli (strain K12), this protein is Mannose-1-phosphate guanylyltransferase (manC).